The chain runs to 188 residues: Adenine phosphoribosyltransferase (188 aa).

134 to 138 (ATGGS) provides a ligand contact to AMP.

The protein belongs to the purine/pyrimidine phosphoribosyltransferase family. Homodimer. It depends on Mg(2+) as a cofactor.

Its subcellular location is the cytoplasm. The protein localises to the nucleus. It carries out the reaction AMP + diphosphate = 5-phospho-alpha-D-ribose 1-diphosphate + adenine. It participates in purine metabolism; AMP biosynthesis via salvage pathway; AMP from adenine: step 1/1. Catalyzes a salvage reaction resulting in the formation of AMP, that is energically less costly than de novo synthesis. This chain is Adenine phosphoribosyltransferase (APT1), found in Candida albicans (strain SC5314 / ATCC MYA-2876) (Yeast).